A 475-amino-acid chain; its full sequence is Arginine biosynthesis bifunctional protein ArgJ 1, mitochondrial (475 aa).

T204, K233, T244, E331, N470, and T475 together coordinate substrate. The active-site Nucleophile is T244.

This sequence belongs to the ArgJ family. In terms of assembly, heterodimer of an alpha and a beta chain. The alpha and beta chains are autoproteolytically processed from a single precursor protein within the mitochondrion.

It is found in the mitochondrion matrix. The enzyme catalyses N(2)-acetyl-L-ornithine + L-glutamate = N-acetyl-L-glutamate + L-ornithine. The catalysed reaction is L-glutamate + acetyl-CoA = N-acetyl-L-glutamate + CoA + H(+). It functions in the pathway amino-acid biosynthesis; L-arginine biosynthesis; L-ornithine and N-acetyl-L-glutamate from L-glutamate and N(2)-acetyl-L-ornithine (cyclic): step 1/1. Its pathway is amino-acid biosynthesis; L-arginine biosynthesis; N(2)-acetyl-L-ornithine from L-glutamate: step 1/4. Its function is as follows. Catalyzes two activities which are involved in the cyclic version of arginine biosynthesis: the synthesis of acetylglutamate from glutamate and acetyl-CoA, and of ornithine by transacetylation between acetylornithine and glutamate. This Botryotinia fuckeliana (strain B05.10) (Noble rot fungus) protein is Arginine biosynthesis bifunctional protein ArgJ 1, mitochondrial.